Consider the following 298-residue polypeptide: Lipoyl synthase (298 aa).

Cysteine 40, cysteine 45, cysteine 51, cysteine 67, cysteine 71, cysteine 74, and serine 280 together coordinate [4Fe-4S] cluster. Residues 53-269 (AVRRTATFMI…KEIAMQKGFS (217 aa)) form the Radical SAM core domain.

It belongs to the radical SAM superfamily. Lipoyl synthase family. It depends on [4Fe-4S] cluster as a cofactor.

It is found in the cytoplasm. The enzyme catalyses [[Fe-S] cluster scaffold protein carrying a second [4Fe-4S](2+) cluster] + N(6)-octanoyl-L-lysyl-[protein] + 2 oxidized [2Fe-2S]-[ferredoxin] + 2 S-adenosyl-L-methionine + 4 H(+) = [[Fe-S] cluster scaffold protein] + N(6)-[(R)-dihydrolipoyl]-L-lysyl-[protein] + 4 Fe(3+) + 2 hydrogen sulfide + 2 5'-deoxyadenosine + 2 L-methionine + 2 reduced [2Fe-2S]-[ferredoxin]. Its pathway is protein modification; protein lipoylation via endogenous pathway; protein N(6)-(lipoyl)lysine from octanoyl-[acyl-carrier-protein]. Catalyzes the radical-mediated insertion of two sulfur atoms into the C-6 and C-8 positions of the octanoyl moiety bound to the lipoyl domains of lipoate-dependent enzymes, thereby converting the octanoylated domains into lipoylated derivatives. The protein is Lipoyl synthase of Bacillus subtilis (strain 168).